A 94-amino-acid polypeptide reads, in one-letter code: ESAT-6-like protein EsxI (94 aa).

Belongs to the WXG100 family. ESAT-6 subfamily.

The protein localises to the secreted. In Mycobacterium bovis (strain ATCC BAA-935 / AF2122/97), this protein is ESAT-6-like protein EsxI.